Here is a 148-residue protein sequence, read N- to C-terminus: uncharacterized protein (148 aa).

The next 4 membrane-spanning stretches (helical) occupy residues 29-49 (FSLV…AAKE), 61-81 (PIIL…PLVM), 99-119 (FIVF…NGFL), and 121-141 (ILVS…TLCI).

The protein resides in the cell membrane. This is an uncharacterized protein from Bacillus subtilis (strain 168).